A 373-amino-acid chain; its full sequence is MAGWSCLVTGAGGFLGQRIVRLLVEEKEVQEIRALDKVFRPELREEFSKLQSKVKLTVLEGDILDEQFLKRACQGASAVIHTASIIDVTNLFNPQVTMNVNVEGTQLLLEACSQASVPIFIYTSSVAVAGPNSYREIIQNGHEEAHLETKWSSPYPYSKKLAEKAVLAANGLPLKNGGTLYTCALRPMFIYGEGSPTLYYLMHEGLNNNGILTHNCKFSRANPVYVGNIAWAHIMALRALRDPKKAPSIQGQFYYISDDTPPQSYDDLTYTLSKKWGFCLDSRMRLPIFLKYWLAFLLEIVSFLLSPIYKYRPPFDRHLVTWQNSVFTFSYKKAQRDMGYEPLFSWEEAKKRTTEWIDALVEPHQEALKTKTL.

The active-site Proton acceptor is Y155. K159 lines the NAD(+) pocket. Residues 288–308 (IFLKYWLAFLLEIVSFLLSPI) traverse the membrane as a helical segment.

The protein belongs to the 3-beta-HSD family.

The protein resides in the endoplasmic reticulum membrane. It is found in the mitochondrion membrane. The enzyme catalyses a 3beta-hydroxy-Delta(5)-steroid + NAD(+) = a 3-oxo-Delta(5)-steroid + NADH + H(+). It carries out the reaction a 3-oxo-Delta(5)-steroid = a 3-oxo-Delta(4)-steroid. It functions in the pathway lipid metabolism; steroid biosynthesis. 3-beta-HSD is a bifunctional enzyme, that catalyzes the oxidative conversion of Delta(5)-ene-3-beta-hydroxy steroid, and the oxidative conversion of ketosteroids. The 3-beta-HSD enzymatic system plays a crucial role in the biosynthesis of all classes of hormonal steroids. The polypeptide is 3 beta-hydroxysteroid dehydrogenase/Delta 5--&gt;4-isomerase (HSD3B) (Equus caballus (Horse)).